The chain runs to 304 residues: Large ribosomal subunit protein uL18 (304 aa).

It belongs to the universal ribosomal protein uL18 family. Component of a hexameric 5S RNP precursor complex, composed of 5S RNA, RRS1, RPF2, RPL5, RPL11 and SYO1; this complex acts as a precursor for ribosome assembly.

It localises to the cytoplasm. Functionally, component of the ribosome, a large ribonucleoprotein complex responsible for the synthesis of proteins in the cell. The small ribosomal subunit (SSU) binds messenger RNAs (mRNAs) and translates the encoded message by selecting cognate aminoacyl-transfer RNA (tRNA) molecules. The large subunit (LSU) contains the ribosomal catalytic site termed the peptidyl transferase center (PTC), which catalyzes the formation of peptide bonds, thereby polymerizing the amino acids delivered by tRNAs into a polypeptide chain. The nascent polypeptides leave the ribosome through a tunnel in the LSU and interact with protein factors that function in enzymatic processing, targeting, and the membrane insertion of nascent chains at the exit of the ribosomal tunnel. This Chaetomium thermophilum (strain DSM 1495 / CBS 144.50 / IMI 039719) (Thermochaetoides thermophila) protein is Large ribosomal subunit protein uL18.